The following is a 1295-amino-acid chain: Protein FORGETTER 1 (1295 aa).

3 stretches are compositionally biased toward pro residues: residues 1–14 (MTQSPVQPPPPLPA), 75–89 (PQQPPQPIQTLPPPI), and 162–177 (PPTPAAPTVPPPPPPE). Disordered stretches follow at residues 1 to 20 (MTQSPVQPPPPLPAQPHSAA), 68 to 107 (RPQFPQSPQQPPQPIQTLPPPIQQQLKPLNLPRPPVPAHG), 153 to 204 (LTAS…MDYR), and 626 to 688 (PEQP…NDSD). The segment covering 178–193 (EVNEEAIEVEREEDEG) has biased composition (acidic residues). The short motif at 643-650 (RKRHSASP) is the Nuclear localization signal element. Residues 669-688 (DNESDLESEADSADDSNDSD) are compositionally biased toward acidic residues. A PHD-type zinc finger spans residues 691–741 (FQICQICSGEDERKKLLHCSECDKLFHPDCVVPPVIDLPSEAWICFSCKEK).

It belongs to the SBNO family. As to quaternary structure, interacts with SWI/SNF and ISWI chromatin remodelers such as BRM, CHR11 and CHR17. Binds to histone H3.

It localises to the nucleus. In terms of biological role, required for normal embryo development. Necessary to acquire heat stress (HS) memory, by modulating nucleosome occupancy and regulating heat-induced gene expression. Associates globally with the nucleosome-poor regions flanking the transcription units of expressed genes. Binds to the promoter regions, primarily to the proximal promoter just upstream of the transcriptional start sites (TSS) and somewhat more weakly to the region downstream of the transcription termination site (TTS), of actively expressed genes (e.g. HSA32, HSP18.2 and HSP22.0) in a heat-dependent fashion. The chain is Protein FORGETTER 1 from Arabidopsis thaliana (Mouse-ear cress).